The primary structure comprises 508 residues: Hydroxymethylglutaryl-CoA synthase, mitochondrial (508 aa).

The transit peptide at 1–37 (MQRLLTPVRQVLRVKRAMQEASFMPPLLPPAAHQRFS) directs the protein to the mitochondrion. Lys52 carries the post-translational modification N6-succinyllysine. (3S)-3-hydroxy-3-methylglutaryl-CoA-binding residues include Glu80 and Ala81. Glu132 functions as the Proton donor/acceptor in the catalytic mechanism. (3S)-3-hydroxy-3-methylglutaryl-CoA-binding residues include Cys166, Asn204, and Thr208. The Acyl-thioester intermediate role is filled by Cys166. Residue Lys243 is modified to N6-acetyllysine. Lys256 carries the post-translational modification N6-acetyllysine; alternate. An N6-succinyllysine; alternate modification is found at Lys256. (3S)-3-hydroxy-3-methylglutaryl-CoA is bound by residues Ser258 and His301. Catalysis depends on His301, which acts as the Proton donor/acceptor. The residue at position 306 (Lys306) is an N6-acetyllysine. Lys310 provides a ligand contact to (3S)-3-hydroxy-3-methylglutaryl-CoA. Lys310 is subject to N6-acetyllysine; alternate. Lys310 is modified (N6-succinyllysine; alternate). Residue Lys333 is modified to N6-succinyllysine. Lys342, Lys350, Lys354, and Lys358 each carry N6-acetyllysine; alternate. N6-succinyllysine; alternate occurs at positions 342, 350, 354, and 358. Residues Asn380 and Ser414 each contribute to the (3S)-3-hydroxy-3-methylglutaryl-CoA site. Residue Ser433 is modified to Phosphoserine. The residue at position 437 (Lys437) is an N6-acetyllysine. A phosphoserine mark is found at Ser440 and Ser456. Lys473 bears the N6-acetyllysine; alternate mark. At Lys473 the chain carries N6-succinyllysine; alternate.

It belongs to the thiolase-like superfamily. HMG-CoA synthase family. As to quaternary structure, homodimer. In terms of processing, succinylated. Desuccinylated by SIRT5. Succinylation, at least at Lys-310, inhibits the enzymatic activity.

The protein resides in the mitochondrion. The catalysed reaction is acetoacetyl-CoA + acetyl-CoA + H2O = (3S)-3-hydroxy-3-methylglutaryl-CoA + CoA + H(+). It functions in the pathway metabolic intermediate biosynthesis; (R)-mevalonate biosynthesis; (R)-mevalonate from acetyl-CoA: step 2/3. Catalyzes the first irreversible step in ketogenesis, condensing acetyl-CoA to acetoacetyl-CoA to form HMG-CoA, which is converted by HMG-CoA reductase (HMGCR) into mevalonate. This is Hydroxymethylglutaryl-CoA synthase, mitochondrial (HMGCS2) from Sus scrofa (Pig).